A 91-amino-acid chain; its full sequence is UPF0223 protein SAB0963 (91 aa).

Belongs to the UPF0223 family.

This is UPF0223 protein SAB0963 from Staphylococcus aureus (strain bovine RF122 / ET3-1).